An 806-amino-acid chain; its full sequence is Hyperosmolality-gated Ca2+ permeable channel 1.8 (806 aa).

Helical transmembrane passes span 7–27 (IGVSALINLFGAFLFLIAFAV), 102–122 (IYTLGLKIFAPVMVLALVVLV), 157–177 (KFFFHIAVEYIFTFWACFMLY), 375–395 (LVIGVSVFALVFFYMIPIAFV), 427–447 (FLPGLALKIFLWILPTVLLIM), 467–487 (YYYFMLVNVFLGSIIAGTAFE), 512–532 (ATFFITYIMVDGWAGIAGEIL), 576–596 (FLLGIVYTAVTPILLPFILIF), 626–646 (VHGRIIASLLISQLLLMGLLA), and 650–670 (AADSTPLLIILPILTLSFHKY). The disordered stretch occupies residues 726-786 (SSSSSSEKET…HYASAYEQSS (61 aa)). Positions 731 to 750 (SEKETHQEETPEVRVDKHET) are enriched in basic and acidic residues. The residue at position 735 (threonine 735) is a Phosphothreonine. The segment covering 751 to 762 (QSSSPVTELGTS) has biased composition (polar residues). Residues 775–786 (SSHYASAYEQSS) are compositionally biased toward low complexity.

The protein belongs to the CSC1 (TC 1.A.17) family.

The protein resides in the golgi apparatus membrane. The protein localises to the cell membrane. Acts as an osmosensitive calcium-permeable cation channel. This chain is Hyperosmolality-gated Ca2+ permeable channel 1.8, found in Arabidopsis thaliana (Mouse-ear cress).